A 479-amino-acid chain; its full sequence is Neuronal acetylcholine receptor subunit alpha-9 (479 aa).

The N-terminal stretch at 1-25 (MNRPHSCLSFCWMYFAASGIRAVET) is a signal peptide. Residues 26 to 237 (ANGKYAQKLF…TFTLLLKRRS (212 aa)) are Extracellular-facing. The N-linked (GlcNAc...) asparagine glycan is linked to Asn-57. A disulfide bridge connects residues Cys-155 and Cys-169. Asn-170 carries N-linked (GlcNAc...) asparagine glycosylation. Na(+) is bound by residues Ser-191 and Asp-193. Cys-219 and Cys-220 are joined by a disulfide. 3 helical membrane passes run 238–262 (SFYIVNLLIPCVLISFLAPLSFYLP), 269–287 (VSLGVTILLAMTVFQLMVA), and 302–323 (YYIATMALITASTALTIMVMNI). Over 324–457 (HFCGAEARPV…WKKVAKVIDR (134 aa)) the chain is Cytoplasmic. The chain crosses the membrane as a helical span at residues 458–476 (FFMWIFFAMVFVMTVLIIA).

It belongs to the ligand-gated ion channel (TC 1.A.9) family. Acetylcholine receptor (TC 1.A.9.1) subfamily. Alpha-9/CHRNA9 sub-subfamily. In terms of assembly, forms homo- or heterooligomeric channels in conjunction with CHRNA10. The native outer hair cell receptor may be composed of CHRNA9:CHRNA10 heterooligomers. Found in the stoichiometric form (CHRNA9)2:(CHRNA10)3. In terms of tissue distribution, detected in the nasal epithelium, in the outer hair cells of the cochlea, in the pars tuberalis of the hypophysis, and in the developing muscle of the tongue. Also expressed in the neurons of dorsal root ganglia.

The protein resides in the synaptic cell membrane. It localises to the cell membrane. The enzyme catalyses Ca(2+)(in) = Ca(2+)(out). The catalysed reaction is Mg(2+)(in) = Mg(2+)(out). It carries out the reaction K(+)(in) = K(+)(out). It catalyses the reaction Na(+)(in) = Na(+)(out). Activated by a myriad of ligands such as acetylcholine. AChR activity is inhibited by the antagonist alpha-conotoxins RgIA and GeXXA, small disulfide-constrained peptides from cone snails. Its function is as follows. Component of neuronal acetylcholine receptors (nAChRs) that function as pentameric, ligand-gated cation channels with high calcium permeability among other activities. nAChRs are excitatory neurotrasnmitter receptors formed by a collection of nAChR subunits known to mediate synaptic transmission in the nervous system and the neuromuscular junction. Each nAchR subunit confers differential attributes to channel properties, including activation, deactivation and desensitization kinetics, pH sensitivity, cation permeability, and binding to allosteric modulators. Forms either homopentamers or heteropentamers with CHRNA10. Expressed in the inner ear, in sympathetic neurons and in other non-neuronal cells, such as skin keratinocytes and lymphocytes. nAChR formed by CHRNA9:CHRNA10 mediate central nervous system control of auditory and vestibular sensory processing. The channel is permeable to a range of divalent cations including calcium, the influx of which may activate a potassium current which hyperpolarizes the cell membrane. In the ear, mediates synaptic transmission between efferent olivocochlear fibers and hair cells of the cochlea, this may lead to a reduction in basilar membrane motion, altering the activity of auditory nerve fibers and reducing the range of dynamic hearing. This may protect against acoustic trauma. May also regulate keratinocyte adhesion. The polypeptide is Neuronal acetylcholine receptor subunit alpha-9 (Chrna9) (Rattus norvegicus (Rat)).